Consider the following 66-residue polypeptide: Ejaculatory bulb-specific protein 2 (66 aa).

An N-terminal signal peptide occupies residues 1 to 20 (MIRILVLMITFTLMTGSALC).

Specifically expressed in the ejaculatory bulb and seminal fluid.

The protein resides in the secreted. In terms of biological role, protein component of the posterior mating plug. The sequence is that of Ejaculatory bulb-specific protein 2 from Drosophila melanogaster (Fruit fly).